A 528-amino-acid polypeptide reads, in one-letter code: Catalase (528 aa).

Residues 1–22 (MADRREKSADQMKLWKESRANQ) show a composition bias toward basic and acidic residues. The segment at 1–32 (MADRREKSADQMKLWKESRANQKPDVLTTGGG) is disordered. Residues H75 and N148 contribute to the active site. The NADP(+) site is built by H194, S201, R203, N213, K237, W303, H305, and K306. Y358 contacts heme. The Microbody targeting signal; atypical signature appears at 525–528 (KANL).

This sequence belongs to the catalase family. As to quaternary structure, homotetramer. Heme is required as a cofactor. Requires NADP(+) as cofactor.

The protein resides in the peroxisome matrix. It carries out the reaction 2 H2O2 = O2 + 2 H2O. Functionally, catalyzes the degradation of hydrogen peroxide (H(2)O(2)) generated by peroxisomal oxidases to water and oxygen, thereby protecting cells from the toxic effects of hydrogen peroxide. This is Catalase (cat) from Glandirana rugosa (Japanese wrinkled frog).